A 339-amino-acid chain; its full sequence is Anthranilate phosphoribosyltransferase (339 aa).

Residues Gly-81, 84-85 (GD), 91-94 (NIST), 109-117 (KHGNRAASS), and Ser-121 each bind 5-phospho-alpha-D-ribose 1-diphosphate. Gly-81 lines the anthranilate pocket. Ser-93 provides a ligand contact to Mg(2+). Asn-112 is an anthranilate binding site. Position 167 (Arg-167) interacts with anthranilate. The Mg(2+) site is built by Asp-226 and Glu-227.

The protein belongs to the anthranilate phosphoribosyltransferase family. Homodimer. Requires Mg(2+) as cofactor.

It catalyses the reaction N-(5-phospho-beta-D-ribosyl)anthranilate + diphosphate = 5-phospho-alpha-D-ribose 1-diphosphate + anthranilate. It functions in the pathway amino-acid biosynthesis; L-tryptophan biosynthesis; L-tryptophan from chorismate: step 2/5. Catalyzes the transfer of the phosphoribosyl group of 5-phosphorylribose-1-pyrophosphate (PRPP) to anthranilate to yield N-(5'-phosphoribosyl)-anthranilate (PRA). The polypeptide is Anthranilate phosphoribosyltransferase (Maricaulis maris (strain MCS10) (Caulobacter maris)).